The following is a 638-amino-acid chain: Threonine--tRNA ligase (638 aa).

The TGS domain maps to 1–61; that stretch reads MPEITLPDGS…DNDSKVVIIT (61 aa). The catalytic stretch occupies residues 242 to 533; the sequence is DHRKLGKKHS…LIEQYEAKFP (292 aa). Residues Cys-333, His-384, and His-510 each contribute to the Zn(2+) site.

This sequence belongs to the class-II aminoacyl-tRNA synthetase family. Homodimer. It depends on Zn(2+) as a cofactor.

The protein localises to the cytoplasm. The catalysed reaction is tRNA(Thr) + L-threonine + ATP = L-threonyl-tRNA(Thr) + AMP + diphosphate + H(+). Its function is as follows. Catalyzes the attachment of threonine to tRNA(Thr) in a two-step reaction: L-threonine is first activated by ATP to form Thr-AMP and then transferred to the acceptor end of tRNA(Thr). Also edits incorrectly charged L-seryl-tRNA(Thr). The protein is Threonine--tRNA ligase of Prochlorococcus marinus subsp. pastoris (strain CCMP1986 / NIES-2087 / MED4).